Here is a 523-residue protein sequence, read N- to C-terminus: Glutamate--cysteine ligase, chloroplastic (523 aa).

A disulfide bond links cysteine 187 and cysteine 407.

Belongs to the carboxylate-amine ligase family. Glutamate--cysteine ligase type 2 subfamily. In terms of assembly, homodimer or monomer when oxidized or reduced, respectively. The Cys-187-Cys-407 disulfide bridge is known to modulate the enzyme activity according to the redox status. The oxidized form constitutes the active enzyme.

It is found in the plastid. The protein resides in the chloroplast. It catalyses the reaction L-cysteine + L-glutamate + ATP = gamma-L-glutamyl-L-cysteine + ADP + phosphate + H(+). It functions in the pathway sulfur metabolism; glutathione biosynthesis; glutathione from L-cysteine and L-glutamate: step 1/2. The chain is Glutamate--cysteine ligase, chloroplastic (GSH1) from Solanum lycopersicum (Tomato).